A 459-amino-acid chain; its full sequence is Replication initiator protein (459 aa).

Essential for pSAM2 replication. This is Replication initiator protein (repSA) from Streptomyces ambofaciens.